Here is a 268-residue protein sequence, read N- to C-terminus: Aliphatic sulfonates import ATP-binding protein SsuB (268 aa).

The region spanning 15–236 is the ABC transporter domain; it reads LAVRNLQKTF…VRGSHRLAAL (222 aa). 47 to 54 serves as a coordination point for ATP; the sequence is GRSGCGKS.

The protein belongs to the ABC transporter superfamily. Aliphatic sulfonates importer (TC 3.A.1.17.2) family. In terms of assembly, the complex is composed of two ATP-binding proteins (SsuB), two transmembrane proteins (SsuC) and a solute-binding protein (SsuA).

Its subcellular location is the cell inner membrane. The enzyme catalyses ATP + H2O + aliphatic sulfonate-[sulfonate-binding protein]Side 1 = ADP + phosphate + aliphatic sulfonateSide 2 + [sulfonate-binding protein]Side 1.. Its function is as follows. Part of the ABC transporter complex SsuABC involved in aliphatic sulfonates import. Responsible for energy coupling to the transport system. This is Aliphatic sulfonates import ATP-binding protein SsuB from Pseudomonas fluorescens (strain Pf0-1).